The following is a 114-amino-acid chain: Putative protein TfaS (114 aa).

It belongs to the tfa family.

The chain is Putative protein TfaS (tfaS) from Escherichia coli (strain K12).